We begin with the raw amino-acid sequence, 257 residues long: Imidazole glycerol phosphate synthase subunit HisF (257 aa).

Residues D12 and D131 contribute to the active site.

This sequence belongs to the HisA/HisF family. In terms of assembly, heterodimer of HisH and HisF.

It is found in the cytoplasm. It carries out the reaction 5-[(5-phospho-1-deoxy-D-ribulos-1-ylimino)methylamino]-1-(5-phospho-beta-D-ribosyl)imidazole-4-carboxamide + L-glutamine = D-erythro-1-(imidazol-4-yl)glycerol 3-phosphate + 5-amino-1-(5-phospho-beta-D-ribosyl)imidazole-4-carboxamide + L-glutamate + H(+). The protein operates within amino-acid biosynthesis; L-histidine biosynthesis; L-histidine from 5-phospho-alpha-D-ribose 1-diphosphate: step 5/9. IGPS catalyzes the conversion of PRFAR and glutamine to IGP, AICAR and glutamate. The HisF subunit catalyzes the cyclization activity that produces IGP and AICAR from PRFAR using the ammonia provided by the HisH subunit. The protein is Imidazole glycerol phosphate synthase subunit HisF of Mycobacteroides abscessus (strain ATCC 19977 / DSM 44196 / CCUG 20993 / CIP 104536 / JCM 13569 / NCTC 13031 / TMC 1543 / L948) (Mycobacterium abscessus).